The sequence spans 208 residues: MKVVEVKHPLVRHKIGLMRAGDISTKRFRELAAEVGSLLTYEATADFATETVTIEGWNGPVEIEQIKGKKVTVVPILRAGLGMMDGVLENIPSARISVVGMYRDEETLEPVPYFEKLASDMPSRIALVVDPMLATGGSMISTIDLLKDRGCTEIKALVLVAAPEGVEALQKAHPDVELYTASIDRCLNEQGYILPGLGDAGDKIFGTK.

5-phospho-alpha-D-ribose 1-diphosphate is bound by residues R78, R103, and 130–138 (DPMLATGGS). Uracil is bound by residues I193 and 198 to 200 (GDA). D199 contributes to the 5-phospho-alpha-D-ribose 1-diphosphate binding site.

The protein belongs to the UPRTase family. The cofactor is Mg(2+).

It catalyses the reaction UMP + diphosphate = 5-phospho-alpha-D-ribose 1-diphosphate + uracil. It participates in pyrimidine metabolism; UMP biosynthesis via salvage pathway; UMP from uracil: step 1/1. Its activity is regulated as follows. Allosterically activated by GTP. Catalyzes the conversion of uracil and 5-phospho-alpha-D-ribose 1-diphosphate (PRPP) to UMP and diphosphate. The sequence is that of Uracil phosphoribosyltransferase from Shewanella sediminis (strain HAW-EB3).